Consider the following 493-residue polypeptide: Guanosine-5'-triphosphate,3'-diphosphate pyrophosphatase (493 aa).

Belongs to the GppA/Ppx family. GppA subfamily.

It carries out the reaction guanosine 3'-diphosphate 5'-triphosphate + H2O = guanosine 3',5'-bis(diphosphate) + phosphate + H(+). It functions in the pathway purine metabolism; ppGpp biosynthesis; ppGpp from GTP: step 2/2. Functionally, catalyzes the conversion of pppGpp to ppGpp. Guanosine pentaphosphate (pppGpp) is a cytoplasmic signaling molecule which together with ppGpp controls the 'stringent response', an adaptive process that allows bacteria to respond to amino acid starvation, resulting in the coordinated regulation of numerous cellular activities. This chain is Guanosine-5'-triphosphate,3'-diphosphate pyrophosphatase, found in Salmonella agona (strain SL483).